Reading from the N-terminus, the 380-residue chain is Tubby-like F-box protein 9 (380 aa).

The 47-residue stretch at proline 30–threonine 76 folds into the F-box domain. The disordered stretch occupies residues serine 258–glycine 283. Polar residues predominate over residues leucine 272–glycine 283.

This sequence belongs to the TUB family. Part of a SCF (SKP1-cullin-F-box) protein ligase complex. Interacts with SKP1A/ASK1 and XERICO. Ubiquitous.

The protein operates within protein modification; protein ubiquitination. Component of SCF(ASK-cullin-F-box) E3 ubiquitin ligase complexes, which may mediate the ubiquitination and subsequent proteasomal degradation of target proteins. Confers sensitivity to ABA during seed germination and early seedling development. In Arabidopsis thaliana (Mouse-ear cress), this protein is Tubby-like F-box protein 9.